Consider the following 359-residue polypeptide: MSALTPHVYWAQRHGEIYLRVEISDAQDLSIGVEENILQFRGQGHGAKGENEYEFSLEFLKPVKPEVKHKSTQRQVNITVRKQEEVWWNRLTKQEKKPLFLAPDFDRWLDESDAEMELREKEEKINKVSFESRVRKDPFLGLKKGFLFMYNLVQFLGYSWIFVNMTVRLFILGQDSFYDTFHTIADVMYFCQMLAIMEVINPAVGLVKTGVMPAFIQVMGRNFILFVIFGSLEDMQNKPVVFFVFYLWSTIEIFRYPFYMLACIDTEWKLLTWLRYTIWMPLYPLGVLAEAVAVIQSIPIFDETKLLSIPLPKATGLSLSFSYILQLYLVVMFLGLFINFRHLFKQRTRRFRTKKRKAN.

Residues 1–144 lie on the Cytoplasmic side of the membrane; it reads MSALTPHVYW…RKDPFLGLKK (144 aa). One can recognise a CS domain in the interval 3-92; sequence ALTPHVYWAQ…QEEVWWNRLT (90 aa). The stretch at 109 to 133 forms a coiled coil; sequence LDESDAEMELREKEEKINKVSFESR. The helical transmembrane segment at 145–165 threads the bilayer; sequence GFLFMYNLVQFLGYSWIFVNM. At 166–186 the chain is on the lumenal side; it reads TVRLFILGQDSFYDTFHTIAD. A helical transmembrane segment spans residues 187–207; the sequence is VMYFCQMLAIMEVINPAVGLV. At 208–209 the chain is on the cytoplasmic side; sequence KT. A helical transmembrane segment spans residues 210–230; that stretch reads GVMPAFIQVMGRNFILFVIFG. Over 231–239 the chain is Lumenal; that stretch reads SLEDMQNKP. A helical transmembrane segment spans residues 240-260; the sequence is VVFFVFYLWSTIEIFRYPFYM. Topologically, residues 261–277 are cytoplasmic; sequence LACIDTEWKLLTWLRYT. Residues 278 to 298 traverse the membrane as a helical segment; that stretch reads IWMPLYPLGVLAEAVAVIQSI. Active-site residues include Y283 and E290. Topologically, residues 299-317 are lumenal; it reads PIFDETKLLSIPLPKATGL. Residues 318 to 338 form a helical membrane-spanning segment; the sequence is SLSFSYILQLYLVVMFLGLFI. At 339-359 the chain is on the cytoplasmic side; it reads NFRHLFKQRTRRFRTKKRKAN.

Belongs to the very long-chain fatty acids dehydratase HACD family.

The protein resides in the endoplasmic reticulum membrane. It catalyses the reaction a very-long-chain (3R)-3-hydroxyacyl-CoA = a very-long-chain (2E)-enoyl-CoA + H2O. It carries out the reaction (3R)-hydroxyhexadecanoyl-CoA = (2E)-hexadecenoyl-CoA + H2O. The protein operates within lipid metabolism; fatty acid biosynthesis. In terms of biological role, catalyzes the third of the four reactions of the long-chain fatty acids elongation cycle. This endoplasmic reticulum-bound enzymatic process, allows the addition of two carbons to the chain of long- and very long-chain fatty acids/VLCFAs per cycle. This enzyme catalyzes the dehydration of the 3-hydroxyacyl-CoA intermediate into trans-2,3-enoyl-CoA, within each cycle of fatty acid elongation. Thereby, it participates in the production of VLCFAs of different chain lengths that are involved in multiple biological processes as precursors of membrane lipids and lipid mediators. Involved in Rac1-signaling pathways leading to the modulation of gene expression. In Danio rerio (Zebrafish), this protein is Very-long-chain (3R)-3-hydroxyacyl-CoA dehydratase.